Here is a 97-residue protein sequence, read N- to C-terminus: uncharacterized protein (97 aa).

The segment at 27–50 (IGESEDKTNSRGQPATMKEDEVED) is disordered.

This is an uncharacterized protein from Caldicellulosiruptor saccharolyticus (Caldocellum saccharolyticum).